A 124-amino-acid chain; its full sequence is Large ribosomal subunit protein bL19 (124 aa).

This sequence belongs to the bacterial ribosomal protein bL19 family.

Functionally, this protein is located at the 30S-50S ribosomal subunit interface and may play a role in the structure and function of the aminoacyl-tRNA binding site. This is Large ribosomal subunit protein bL19 from Cereibacter sphaeroides (strain ATCC 17029 / ATH 2.4.9) (Rhodobacter sphaeroides).